The primary structure comprises 600 residues: Calcium/calmodulin-dependent serine/threonine-protein kinase 1 (600 aa).

The tract at residues 1 to 99 is disordered; it reads MGLCHGKSAA…GGFKRPFPPP (99 aa). Over residues 24 to 56 the composition is skewed to low complexity; it reads TRVAEAAAAPAKPASPAPSAAAAAAAPAKPGTP. Over residues 74–85 the composition is skewed to polar residues; it reads YKGSPANSSVAS. The Protein kinase domain maps to 147–409; it reads YELGREVGRG…AAQALCHPWI (263 aa). Residues 153 to 161 and lysine 179 each bind ATP; that span reads VGRGHFGYT. The active-site Proton acceptor is the aspartate 275.

The protein belongs to the protein kinase superfamily. Ser/Thr protein kinase family. Autophosphorylated. As to expression, highly expressed in roots in the zone of cell division. Expressed in leaf mesophyll cells and at lower levels in mature stems.

It carries out the reaction L-seryl-[protein] + ATP = O-phospho-L-seryl-[protein] + ADP + H(+). The enzyme catalyses L-threonyl-[protein] + ATP = O-phospho-L-threonyl-[protein] + ADP + H(+). Its activity is regulated as follows. Activated by the binding of calmodulin-like protein 1 (CML1) in the presence of Ca(2+). In terms of biological role, possesses kinase activity in vitro. The polypeptide is Calcium/calmodulin-dependent serine/threonine-protein kinase 1 (CAMK1) (Oryza sativa subsp. japonica (Rice)).